Reading from the N-terminus, the 278-residue chain is uncharacterized protein (278 aa).

In terms of domain architecture, Response regulatory spans 1-55 (MKIRERFSMVDLPVLIITAAIIGHDKYKAFHAGANDILQKPYHYSEFMARIQNLI).

This is an uncharacterized protein from Bacillus subtilis (strain 168).